Reading from the N-terminus, the 1893-residue chain is Plexin-A4 (1893 aa).

The first 23 residues, 1 to 23, serve as a signal peptide directing secretion; the sequence is MKAMPWNWTCLLSHLLVVGMGSS. One can recognise a Sema domain in the interval 24-506; it reads TLLPRQPPQL…SERQLTRVPV (483 aa). At 24–1236 the chain is on the extracellular side; that stretch reads TLLPRQPPQL…IAPDSPLSLP (1213 aa). 10 cysteine pairs are disulfide-bonded: Cys-94/Cys-103, Cys-129/Cys-137, Cys-283/Cys-404, Cys-299/Cys-355, Cys-373/Cys-392, Cys-509/Cys-526, Cys-515/Cys-557, Cys-518/Cys-535, Cys-529/Cys-541, and Cys-592/Cys-611. Residues 508-558 form the PSI 1 domain; the sequence is SCGQYRSCGECLGSGDPHCGWCVLHNTCTRKERCERSREPRRFASEMKQCV. An N-linked (GlcNAc...) asparagine glycan is attached at Asn-654. 2 PSI domains span residues 654-701 and 802-855; these read NCSV…EDCP and KCGA…SKCT. IPT/TIG domains lie at 857-951, 953-1036, 1039-1138, and 1141-1229; these read PRIT…YYFM, LTLA…FQYV, PTIV…FTYY, and PVFE…YIAP. N-linked (GlcNAc...) asparagine glycosylation is found at Asn-1006, Asn-1131, and Asn-1179. Residues 1237 to 1257 traverse the membrane as a helical segment; the sequence is AIVSIAVAGGLLIIFIVAVLI. At 1258-1893 the chain is on the cytoplasmic side; the sequence is AYKRKSRESD…QVITLMSLDS (636 aa). At Lys-1349 the chain carries N6-acetyllysine.

The protein belongs to the plexin family. As to quaternary structure, interacts with NRP1 and NRP2. As to expression, expressed in the developing nervous system. Widely expressed in both the central and peripheral nervous systems. Expressed in the peripheral ganglia, somatosensory, olfactory, visual, auditory and equilibrium systems.

The protein resides in the cell membrane. In terms of biological role, coreceptor for SEMA3A. Necessary for signaling by class 3 semaphorins and subsequent remodeling of the cytoskeleton. Plays a role in axon guidance in the developing nervous system. Class 3 semaphorins bind to a complex composed of a neuropilin and a plexin. The plexin modulates the affinity of the complex for specific semaphorins, and its cytoplasmic domain is required for the activation of down-stream signaling events in the cytoplasm. This chain is Plexin-A4 (Plxna4), found in Mus musculus (Mouse).